Reading from the N-terminus, the 552-residue chain is Nucleoside-diphosphatase mig-23 (552 aa).

The Cytoplasmic portion of the chain corresponds to 1–6 (MRVSLR). The chain crosses the membrane as a helical span at residues 7–27 (FTILAVSAMIFFPVIVFIYVV). The Lumenal portion of the chain corresponds to 28-489 (EAHTSPKVIA…IVKETHSSSE (462 aa)). Catalysis depends on Glu-174, which acts as the Proton acceptor. N-linked (GlcNAc...) asparagine glycans are attached at residues Asn-190 and Asn-284. Residues 490–510 (SLWAPLFFLSAVFCLFVLVCA) form a helical membrane-spanning segment. The Cytoplasmic segment spans residues 511–552 (KEQSVLCFDDKRRSSFGMSRSQYSYKMLKENRTSSSFLENFA).

This sequence belongs to the GDA1/CD39 NTPase family. Expressed in body wall muscles.

The protein localises to the golgi apparatus membrane. The enzyme catalyses a ribonucleoside 5'-diphosphate + H2O = a ribonucleoside 5'-phosphate + phosphate + H(+). Seems to be able to hydrolyze ADP, UDP and GDP. Supports mig-17 glycosylation and surface expression, which is required for proper migration of distal tip cells during gonad morphogenesis. The chain is Nucleoside-diphosphatase mig-23 (mig-23) from Caenorhabditis elegans.